A 643-amino-acid chain; its full sequence is Type VI secretion system spike protein VgrG1a (643 aa).

This sequence belongs to the VgrG protein family. In terms of assembly, forms homotrimers. Part of the type VI secretion system (T6SS). Interacts with EagT6 and Tse6; these interactions are required for Tse6 loading onto VgrG1. Interacts with Hcp1.

It localises to the secreted. Part of the H1 type VI secretion system (H1-T6SS) specialized secretion system, which delivers several virulence factors in both prokaryotic and eukaryotic cells during infection. Forms the spike at the tip of the elongating tube formed by haemolysin co-regulated protein 1/Hcp1. Allows the delivery of the Tse6 toxin to target cells where it exerts its toxicity. The protein is Type VI secretion system spike protein VgrG1a of Pseudomonas aeruginosa (strain ATCC 15692 / DSM 22644 / CIP 104116 / JCM 14847 / LMG 12228 / 1C / PRS 101 / PAO1).